The sequence spans 84 residues: CDC42 small effector protein 2 (84 aa).

Residues Cys-10 and Cys-11 are each lipidated (S-palmitoyl cysteine). A CRIB domain is found at 29–42 (IGEPTNFAHTAHVG). Phosphoserine occurs at positions 43 and 52.

It belongs to the CDC42SE/SPEC family. Interacts with CDC42 (in GTP-bound form). Interacts weakly with RAC1 and not at all with RHOA.

Its subcellular location is the cytoplasm. It localises to the cytoskeleton. It is found in the cell membrane. The protein resides in the cell projection. The protein localises to the phagocytic cup. Its function is as follows. Probably involved in the organization of the actin cytoskeleton by acting downstream of CDC42, inducing actin filament assembly. Alters CDC42-induced cell shape changes. In activated T-cells, may play a role in CDC42-mediated F-actin accumulation at the immunological synapse. May play a role in early contractile events in phagocytosis in macrophages. This is CDC42 small effector protein 2 (CDC42SE2) from Pongo abelii (Sumatran orangutan).